We begin with the raw amino-acid sequence, 1191 residues long: Major DNA-binding protein (1191 aa).

Positions 288–307 (ETTKGQSKMGKREGSDVSGG) are disordered. A zinc finger lies at 498–511 (CELCDKTSRIYCAH). The Required for filament formation signature appears at 841–842 (FW). Residues 1166 to 1191 (KRPNMNVFDLEPIPEKRVPVLSVDML) form a required for nuclear localization region.

This sequence belongs to the herpesviridae major DNA-binding protein family. In terms of assembly, homooligomers. Forms double-helical filaments necessary for the formation of replication compartments within the host nucleus. Interacts with the origin-binding protein. Interacts with the helicase primase complex; this interaction stimulates primer synthesis activity of the helicase-primase complex. Interacts with the DNA polymerase. Interacts with the alkaline exonuclease; this interaction increases its nuclease processivity.

The protein localises to the host nucleus. Plays several crucial roles in viral infection. Participates in the opening of the viral DNA origin to initiate replication by interacting with the origin-binding protein. May disrupt loops, hairpins and other secondary structures present on ssDNA to reduce and eliminate pausing of viral DNA polymerase at specific sites during elongation. Promotes viral DNA recombination by performing strand-transfer, characterized by the ability to transfer a DNA strand from a linear duplex to a complementary single-stranded DNA circle. Can also catalyze the renaturation of complementary single strands. Additionally, reorganizes the host cell nucleus, leading to the formation of prereplicative sites and replication compartments. This process is driven by the protein which can form double-helical filaments in the absence of DNA. The polypeptide is Major DNA-binding protein (Gallid herpesvirus 2 (strain Chicken/Md5/ATCC VR-987) (GaHV-2)).